The following is a 258-amino-acid chain: U6 snRNA phosphodiesterase 1 (258 aa).

The interval 1–20 (MALVDYGGSSSSASEDEDCT) is disordered. H117 (proton acceptor) is an active-site residue. Residues 117 to 119 (HLS), Y200, and 202 to 208 (PASFHVS) each bind AMP. UMP-binding positions include Y200 and 204 to 208 (SFHVS). H206 (proton donor) is an active-site residue.

This sequence belongs to the 2H phosphoesterase superfamily. USB1 family.

It is found in the nucleus. The enzyme catalyses a 3'-end uridylyl-uridine-RNA = a 3'-end 2',3'-cyclophospho-uridine-RNA + uridine. In terms of biological role, 3'-5' RNA exonuclease that trims the 3' end of oligo(U) tracts of the pre-U6 small nuclear RNA (snRNA) molecule, leading to the formation of a mature U6 snRNA 3' end-terminated with a 2',3'-cyclic phosphate. Participates in the U6 snRNA 3' end processing that prevents U6 snRNA degradation. This is U6 snRNA phosphodiesterase 1 from Drosophila melanogaster (Fruit fly).